We begin with the raw amino-acid sequence, 415 residues long: Probable peptidoglycan glycosyltransferase FtsW (415 aa).

11 consecutive transmembrane segments (helical) span residues 31–51 (PILMVAVLALLAWGLVMVTSA), 63–83 (FFFVIRQTIAVVIGASITVWL), 97–117 (LWILIASLLLLLVVLLPGIGH), 133–153 (IQVSEFARLGLIIWMAGYIAT), 162–182 (ITGMLGPGVVIFAASLLLLLQ), 185–205 (FGTTAVLAATLFAMAWLARAQ), 206–226 (WQMMVGSTLVMGVLGVFVVLS), 245–265 (FGHGYQLANALIAIGTGGVWG), 285–305 (FIFAVLAEELGLIGVIALIGL), 326–346 (IAGAALAWGISVWIGMQALIN), and 361–381 (LPLMSYGGSAMIVALISLGFL).

Belongs to the SEDS family. FtsW subfamily.

Its subcellular location is the cell inner membrane. The catalysed reaction is [GlcNAc-(1-&gt;4)-Mur2Ac(oyl-L-Ala-gamma-D-Glu-L-Lys-D-Ala-D-Ala)](n)-di-trans,octa-cis-undecaprenyl diphosphate + beta-D-GlcNAc-(1-&gt;4)-Mur2Ac(oyl-L-Ala-gamma-D-Glu-L-Lys-D-Ala-D-Ala)-di-trans,octa-cis-undecaprenyl diphosphate = [GlcNAc-(1-&gt;4)-Mur2Ac(oyl-L-Ala-gamma-D-Glu-L-Lys-D-Ala-D-Ala)](n+1)-di-trans,octa-cis-undecaprenyl diphosphate + di-trans,octa-cis-undecaprenyl diphosphate + H(+). It participates in cell wall biogenesis; peptidoglycan biosynthesis. In terms of biological role, peptidoglycan polymerase that is essential for cell division. The polypeptide is Probable peptidoglycan glycosyltransferase FtsW (Halothiobacillus neapolitanus (strain ATCC 23641 / c2) (Thiobacillus neapolitanus)).